The chain runs to 460 residues: Cysteine--tRNA ligase (460 aa).

Cysteine 28 contacts Zn(2+). A 'HIGH' region motif is present at residues 30–40; the sequence is MTVYDYCHLGH. The Zn(2+) site is built by cysteine 209, histidine 234, and glutamate 238. Residues 266–270 carry the 'KMSKS' region motif; that stretch reads KMSKS. Residue lysine 269 participates in ATP binding.

This sequence belongs to the class-I aminoacyl-tRNA synthetase family. As to quaternary structure, monomer. It depends on Zn(2+) as a cofactor.

The protein resides in the cytoplasm. The catalysed reaction is tRNA(Cys) + L-cysteine + ATP = L-cysteinyl-tRNA(Cys) + AMP + diphosphate. The polypeptide is Cysteine--tRNA ligase (Pseudomonas putida (strain ATCC 700007 / DSM 6899 / JCM 31910 / BCRC 17059 / LMG 24140 / F1)).